A 432-amino-acid chain; its full sequence is Short transient receptor potential channel 2 homolog (432 aa).

The next 4 helical transmembrane spans lie at 1 to 21 (MVIL…AGLA), 52 to 72 (FLAE…LASI), 96 to 116 (FMFI…NIYV), and 162 to 182 (LYGI…IAMI). The interval 356–432 (QNLGPPIPET…EADLGAKEGT (77 aa)) is disordered. Positions 387-404 (AGGAQAPASGESGPSSPA) are enriched in low complexity.

Belongs to the transient receptor (TC 1.A.4) family. STrpC subfamily. TRPC2 sub-subfamily.

Its subcellular location is the membrane. Thought to form a receptor-activated calcium permeant cation channel. The polypeptide is Short transient receptor potential channel 2 homolog (TRPC2) (Bos taurus (Bovine)).